A 561-amino-acid chain; its full sequence is Membrane protein insertase YidC (561 aa).

6 consecutive transmembrane segments (helical) span residues 7 to 27 (ILIV…NQDY), 342 to 362 (LELT…FWLL), 368 to 388 (LLGN…GLFF), 438 to 458 (LGGC…YWVL), 469 to 489 (WMLW…PIIM), and 516 to 536 (PIIF…YWVV).

Belongs to the OXA1/ALB3/YidC family. Type 1 subfamily. Interacts with the Sec translocase complex via SecD. Specifically interacts with transmembrane segments of nascent integral membrane proteins during membrane integration.

The protein resides in the cell inner membrane. Its function is as follows. Required for the insertion and/or proper folding and/or complex formation of integral membrane proteins into the membrane. Involved in integration of membrane proteins that insert both dependently and independently of the Sec translocase complex, as well as at least some lipoproteins. Aids folding of multispanning membrane proteins. This is Membrane protein insertase YidC from Pseudomonas entomophila (strain L48).